A 192-amino-acid polypeptide reads, in one-letter code: Cytidylate kinase (192 aa).

7–15 (GPAGSGKST) contributes to the ATP binding site.

It belongs to the cytidylate kinase family. Type 2 subfamily.

It localises to the cytoplasm. The catalysed reaction is CMP + ATP = CDP + ADP. It carries out the reaction dCMP + ATP = dCDP + ADP. This is Cytidylate kinase from Haloarcula marismortui (strain ATCC 43049 / DSM 3752 / JCM 8966 / VKM B-1809) (Halobacterium marismortui).